We begin with the raw amino-acid sequence, 343 residues long: Endoglucanase C (343 aa).

The Proton donor role is filled by Glu140. The active-site Nucleophile is the Glu280.

It belongs to the glycosyl hydrolase 5 (cellulase A) family.

The catalysed reaction is Endohydrolysis of (1-&gt;4)-beta-D-glucosidic linkages in cellulose, lichenin and cereal beta-D-glucans.. The protein operates within glycan metabolism; cellulose degradation. Functionally, this enzyme catalyzes the endohydrolysis of 1,4-beta-glucosidic linkages in cellulose, lichenin and cereal beta-D-glucans. The polypeptide is Endoglucanase C (celC) (Acetivibrio thermocellus (strain ATCC 27405 / DSM 1237 / JCM 9322 / NBRC 103400 / NCIMB 10682 / NRRL B-4536 / VPI 7372) (Clostridium thermocellum)).